We begin with the raw amino-acid sequence, 1103 residues long: Isoleucine--tRNA ligase (1103 aa).

Residues M1–P25 are disordered. Positions P65–H75 match the 'HIGH' region motif. Residues K649–H653 carry the 'KMSKS' region motif. K652 contributes to the ATP binding site.

This sequence belongs to the class-I aminoacyl-tRNA synthetase family. IleS type 2 subfamily. In terms of assembly, monomer. Requires Zn(2+) as cofactor.

It is found in the cytoplasm. It carries out the reaction tRNA(Ile) + L-isoleucine + ATP = L-isoleucyl-tRNA(Ile) + AMP + diphosphate. Functionally, catalyzes the attachment of isoleucine to tRNA(Ile). As IleRS can inadvertently accommodate and process structurally similar amino acids such as valine, to avoid such errors it has two additional distinct tRNA(Ile)-dependent editing activities. One activity is designated as 'pretransfer' editing and involves the hydrolysis of activated Val-AMP. The other activity is designated 'posttransfer' editing and involves deacylation of mischarged Val-tRNA(Ile). The sequence is that of Isoleucine--tRNA ligase from Bifidobacterium longum (strain NCC 2705).